The following is a 321-amino-acid chain: Transaldolase (321 aa).

Residue Lys-132 is the Schiff-base intermediate with substrate of the active site.

The protein belongs to the transaldolase family. Type 1 subfamily. Homodimer.

The protein localises to the cytoplasm. The enzyme catalyses D-sedoheptulose 7-phosphate + D-glyceraldehyde 3-phosphate = D-erythrose 4-phosphate + beta-D-fructose 6-phosphate. It participates in carbohydrate degradation; pentose phosphate pathway; D-glyceraldehyde 3-phosphate and beta-D-fructose 6-phosphate from D-ribose 5-phosphate and D-xylulose 5-phosphate (non-oxidative stage): step 2/3. In terms of biological role, transaldolase is important for the balance of metabolites in the pentose-phosphate pathway. The sequence is that of Transaldolase from Marinobacter nauticus (strain ATCC 700491 / DSM 11845 / VT8) (Marinobacter aquaeolei).